The chain runs to 328 residues: Delta(3,5)-Delta(2,4)-dienoyl-CoA isomerase, mitochondrial (328 aa).

The N-terminal 33 residues, methionine 1–leucine 33, are a transit peptide targeting the mitochondrion. Substrate-binding positions include alanine 116–leucine 120 and glycine 174. Lysine 231 carries the post-translational modification N6-succinyllysine. Serine 268 carries the post-translational modification Phosphoserine. Positions serine 326–leucine 328 match the Microbody targeting signal motif. At lysine 327 the chain carries N6-acetyllysine.

This sequence belongs to the enoyl-CoA hydratase/isomerase family. As to quaternary structure, homohexamer.

It localises to the mitochondrion. It is found in the peroxisome. It catalyses the reaction (3E,5Z)-octadienoyl-CoA = (2E,4E)-octadienoyl-CoA. The catalysed reaction is (3E,5Z,8Z,11Z,14Z)-eicosapentaenoyl-CoA = (2E,4E,8Z,11Z,14Z)-eicosapentaenoyl-CoA. The protein operates within lipid metabolism; fatty acid beta-oxidation. In terms of biological role, isomerization of 3-trans,5-cis-dienoyl-CoA to 2-trans,4-trans-dienoyl-CoA. In Homo sapiens (Human), this protein is Delta(3,5)-Delta(2,4)-dienoyl-CoA isomerase, mitochondrial.